Reading from the N-terminus, the 384-residue chain is Alanine racemase (384 aa).

K39 serves as the catalytic Proton acceptor; specific for D-alanine. Position 39 is an N6-(pyridoxal phosphate)lysine (K39). R136 lines the substrate pocket. The Proton acceptor; specific for L-alanine role is filled by Y265. A substrate-binding site is contributed by M312.

This sequence belongs to the alanine racemase family. Pyridoxal 5'-phosphate is required as a cofactor.

The catalysed reaction is L-alanine = D-alanine. It participates in amino-acid biosynthesis; D-alanine biosynthesis; D-alanine from L-alanine: step 1/1. In terms of biological role, catalyzes the interconversion of L-alanine and D-alanine. May also act on other amino acids. In Geobacillus kaustophilus (strain HTA426), this protein is Alanine racemase (alr).